Consider the following 151-residue polypeptide: Class I hydrophobin A (151 aa).

Residues 1 to 17 (MQFSVAAVLALATAVAA) form the signal peptide. 4 cysteine pairs are disulfide-bonded: Cys52/Cys125, Cys60/Cys119, Cys61/Cys101, and Cys126/Cys144.

This sequence belongs to the fungal hydrophobin family. Interacts with cutinase cutL1 in a pH-dependent manner. Self-assembles to form functional amyloid fibrils called rodlets. Self-assembly into fibrillar rodlets occurs spontaneously at hydrophobic:hydrophilic interfaces and the rodlets further associate laterally to form amphipathic monolayers. rolA rodlet formation is regulated by the strength of ionic interactions between rolA molecules. Three types of self-assembled structures of rolA are observed: spherical, rod-like, and mesh-like.

The protein resides in the secreted. Its subcellular location is the cell wall. Aerial growth, conidiation, and dispersal of filamentous fungi in the environment rely upon a capability of their secreting small amphipathic proteins called hydrophobins (HPBs) with low sequence identity. Class I can self-assemble into an outermost layer of rodlet bundles on aerial cell surfaces, conferring cellular hydrophobicity that supports fungal growth, development and dispersal; whereas Class II form highly ordered films at water-air interfaces through intermolecular interactions but contribute nothing to the rodlet structure. RolA is a class I hydrophobin that undergoes a conformational change after its adsorption to hydrophobic surfaces such as the biodegradable polyester polybutylene succinate-coadipate (PBSA) and recruits the cutinase cutL1, resulting in condensation of cutL1 on the PBSA surface and consequent stimulation of PBSA hydrolysis. Increases also the activity of polyethylene terephthalate hydrolase (PETase) that hydrolyzes polyethylene terephthalate (PET), one of the most well-known polyesters that is widely used as packaging material, when the PET samples are preincubated with the hydrophobin. The wetting effect of rolA probably acts on PET surface to become hydrophilic, which leads PETase easier to contact and attack the surface. The chain is Class I hydrophobin A from Aspergillus oryzae (strain ATCC 42149 / RIB 40) (Yellow koji mold).